A 460-amino-acid chain; its full sequence is UDP-N-acetylmuramoylalanine--D-glutamate ligase (460 aa).

117–123 (GTNGKTT) is an ATP binding site.

This sequence belongs to the MurCDEF family.

It is found in the cytoplasm. The catalysed reaction is UDP-N-acetyl-alpha-D-muramoyl-L-alanine + D-glutamate + ATP = UDP-N-acetyl-alpha-D-muramoyl-L-alanyl-D-glutamate + ADP + phosphate + H(+). It functions in the pathway cell wall biogenesis; peptidoglycan biosynthesis. Its function is as follows. Cell wall formation. Catalyzes the addition of glutamate to the nucleotide precursor UDP-N-acetylmuramoyl-L-alanine (UMA). This chain is UDP-N-acetylmuramoylalanine--D-glutamate ligase, found in Prochlorococcus marinus (strain MIT 9313).